The sequence spans 692 residues: Elongation factor G (692 aa).

The region spanning 8-282 is the tr-type G domain; that stretch reads EKTRNIGIMA…AIVDFLPAPT (275 aa). GTP contacts are provided by residues 17 to 24, 81 to 85, and 135 to 138; these read AHIDAGKT, DTPGH, and NKMD.

It belongs to the TRAFAC class translation factor GTPase superfamily. Classic translation factor GTPase family. EF-G/EF-2 subfamily.

It localises to the cytoplasm. Functionally, catalyzes the GTP-dependent ribosomal translocation step during translation elongation. During this step, the ribosome changes from the pre-translocational (PRE) to the post-translocational (POST) state as the newly formed A-site-bound peptidyl-tRNA and P-site-bound deacylated tRNA move to the P and E sites, respectively. Catalyzes the coordinated movement of the two tRNA molecules, the mRNA and conformational changes in the ribosome. The polypeptide is Elongation factor G (Moorella thermoacetica (strain ATCC 39073 / JCM 9320)).